The sequence spans 287 residues: Small ribosomal subunit biogenesis GTPase RsgA (287 aa).

The 161-residue stretch at 63–223 (KNLLIRPKVA…VIDTPGFGSL (161 aa)) folds into the CP-type G domain. GTP contacts are provided by residues 113–116 (SKMD) and 166–174 (GQSGVGKST). Residues Cys-246, Cys-251, His-253, and Cys-259 each contribute to the Zn(2+) site.

The protein belongs to the TRAFAC class YlqF/YawG GTPase family. RsgA subfamily. Monomer. Associates with 30S ribosomal subunit, binds 16S rRNA. Requires Zn(2+) as cofactor.

It localises to the cytoplasm. One of several proteins that assist in the late maturation steps of the functional core of the 30S ribosomal subunit. Helps release RbfA from mature subunits. May play a role in the assembly of ribosomal proteins into the subunit. Circularly permuted GTPase that catalyzes slow GTP hydrolysis, GTPase activity is stimulated by the 30S ribosomal subunit. In Malacoplasma penetrans (strain HF-2) (Mycoplasma penetrans), this protein is Small ribosomal subunit biogenesis GTPase RsgA.